Consider the following 559-residue polypeptide: Probable 2-ketoarginine decarboxylase AruI (559 aa).

A thiamine diphosphate-binding site is contributed by glutamate 76.

The protein belongs to the TPP enzyme family. Thiamine diphosphate serves as cofactor.

It carries out the reaction 5-guanidino-2-oxopentanoate + H(+) = 4-guanidinobutanal + CO2. It functions in the pathway amino-acid degradation; L-arginine degradation. Functionally, catalyzes the decarboxylation of 2-ketoarginine, leading to the formation of 4-guanidinobutyraldehyde. The protein is Probable 2-ketoarginine decarboxylase AruI (aruI) of Pseudomonas aeruginosa (strain ATCC 15692 / DSM 22644 / CIP 104116 / JCM 14847 / LMG 12228 / 1C / PRS 101 / PAO1).